Here is a 157-residue protein sequence, read N- to C-terminus: UPF0225 protein PSPPH_1399 (157 aa).

It belongs to the UPF0225 family.

This Pseudomonas savastanoi pv. phaseolicola (strain 1448A / Race 6) (Pseudomonas syringae pv. phaseolicola (strain 1448A / Race 6)) protein is UPF0225 protein PSPPH_1399.